The sequence spans 110 residues: Small ribosomal subunit protein bS18c (110 aa).

It belongs to the bacterial ribosomal protein bS18 family. Part of the 30S ribosomal subunit.

It localises to the plastid. It is found in the chloroplast. This is Small ribosomal subunit protein bS18c (rps18) from Pisum sativum (Garden pea).